We begin with the raw amino-acid sequence, 495 residues long: Sialin (495 aa).

Residues M1–Q24 form a disordered region. S3 is modified (phosphoserine). Residues L22–L23 carry the Dileucine internalization motif motif. Residues L42–V62 traverse the membrane as a helical segment. Residues N71, N77, and N95 are each glycosylated (N-linked (GlcNAc...) asparagine). Transmembrane regions (helical) follow at residues W110–A130, L137–A157, F159–Y179, I201–C221, Y228–V248, L289–L309, F329–A349, V366–G386, A392–I412, I424–A444, and T458–A478.

This sequence belongs to the major facilitator superfamily. Sodium/anion cotransporter family. As to expression, significantly expressed in lung endothelial cells, and much less in liver.

The protein localises to the basolateral cell membrane. Its subcellular location is the cytoplasmic vesicle. It localises to the secretory vesicle. The protein resides in the synaptic vesicle membrane. It is found in the lysosome membrane. It carries out the reaction N-acetylneuraminate(in) + H(+)(in) = N-acetylneuraminate(out) + H(+)(out). The enzyme catalyses D-glucuronate(out) + H(+)(out) = D-glucuronate(in) + H(+)(in). It catalyses the reaction 2 nitrate(out) + H(+)(out) = 2 nitrate(in) + H(+)(in). The catalysed reaction is L-aspartate(out) = L-aspartate(in). It carries out the reaction L-glutamate(out) = L-glutamate(in). The enzyme catalyses N-acetyl-L-aspartyl-L-glutamate(out) = N-acetyl-L-aspartyl-L-glutamate(in). Multifunctional anion transporter that operates via two distinct transport mechanisms, namely proton-coupled anion cotransport and membrane potential-dependent anion transport. Electroneutral proton-coupled acidic monosaccharide symporter, with a sugar to proton stoichiometry of 1:1. Exports glucuronic acid and free sialic acid derived from sialoglycoconjugate degradation out of lysosomes, driven by outwardly directed lysosomal pH gradient. May regulate lysosome function and metabolism of sialylated conjugates that impact oligodendrocyte lineage differentiation and myelinogenesis in the central nervous system. Electrogenic proton-coupled nitrate symporter that transports nitrate ions across the basolateral membrane of salivary gland acinar cells, with nitrate to proton stoichiometry of 2:1. May contribute to nitrate clearance from serum by salivary glands, where it is further concentrated and secreted in the saliva. Uses membrane potential to drive the uptake of acidic amino acids and peptides into synaptic vesicles. Responsible for synaptic vesicular storage of L-aspartate and L-glutamate in pinealocytes as well as vesicular uptake of N-acetyl-L-aspartyl-L-glutamate neuropeptide, relevant to aspartegic-associated glutamatergic neurotransmission and activation of metabotropic receptors that inhibit subsequent transmitter release. Functionally, receptor for CM101, a polysaccharide produced by group B Streptococcus with antipathoangiogenic properties. This Ovis aries (Sheep) protein is Sialin (SLC17A5).